The following is a 145-amino-acid chain: 3-dehydroquinate dehydratase (145 aa).

Catalysis depends on tyrosine 23, which acts as the Proton acceptor. Residues asparagine 74, histidine 80, and aspartate 87 each coordinate substrate. Histidine 100 serves as the catalytic Proton donor. Residues 101–102 (LS) and arginine 111 each bind substrate.

The protein belongs to the type-II 3-dehydroquinase family. As to quaternary structure, homododecamer.

The catalysed reaction is 3-dehydroquinate = 3-dehydroshikimate + H2O. The protein operates within metabolic intermediate biosynthesis; chorismate biosynthesis; chorismate from D-erythrose 4-phosphate and phosphoenolpyruvate: step 3/7. Catalyzes a trans-dehydration via an enolate intermediate. The polypeptide is 3-dehydroquinate dehydratase (Halalkalibacterium halodurans (strain ATCC BAA-125 / DSM 18197 / FERM 7344 / JCM 9153 / C-125) (Bacillus halodurans)).